The primary structure comprises 233 residues: Uridylate kinase (233 aa).

Residues 9 to 12, glycine 51, and arginine 55 contribute to the ATP site; that span reads KLSG. Residues aspartate 69 and 130–137 contribute to the UMP site; that span reads TGNPFFST. Asparagine 158, tyrosine 164, and aspartate 167 together coordinate ATP.

The protein belongs to the UMP kinase family. As to quaternary structure, homohexamer.

It is found in the cytoplasm. It carries out the reaction UMP + ATP = UDP + ADP. The protein operates within pyrimidine metabolism; CTP biosynthesis via de novo pathway; UDP from UMP (UMPK route): step 1/1. Inhibited by UTP. Catalyzes the reversible phosphorylation of UMP to UDP. In Thermus thermophilus (strain ATCC BAA-163 / DSM 7039 / HB27), this protein is Uridylate kinase.